We begin with the raw amino-acid sequence, 882 residues long: MEKIRLSDFAKEFGKEAKFAYEKAKEMGLSVKTPSSSLTQEEAAALFEYINTGVNSYIPANKTKDKKETKKPKKATTKTSQSAAKEKEIKKTTTTKAPKTAKKTTSEKQKDKGEQNEIEQDDAQFPAQAPQSKRASKKVESNDMTAPLETKAKVGLRIVRKNDTPQEQPSMVSKKDESKKHAPSYKELLADTADEEYKRHKKDKSKPKVATKHTDQKIHILDDRDISFHSDYDDEQDEIMLFDLNEREVRDEEEENQIRQAITERVHIHRKNPWMNEGSIKRGGKRRKPIKTTKNVDKIKGPISIPEEIRVYEFAELIKAELKDVIKVLFNLGVMATKNDFLDRDAIEILSDEFELEISIQDAPEQNIIESTPDIDSPLLERPPVVTIMGHVDHGKTSLLDYIRNSRIASGEAGGITQHIGAYMVEKNGKKISFIDTPGHEAFTQMRSRGAQVTDIAIIVIAADDGVKQQTIEALNHAKAANVQIIIAMNKMDKENANPDKLKAECAEIGFTPNEWGGEYEFIPISAKNGDGVENLLETILIQAEVLELKASHQGRAKAIVLEASLEKGRGPVATIIMQQGILNVGDSVVADTAFGRVRALLDDRGQNISQLSPSGVAVVTGLSEVPSAGAIFQSVENDTIAREHAQKRALYLRQKELSKSTKVTFDELGEMVAQGNLKTLPLIIKADTQGSLEAIKASLEKLSNDEVRINIIGFGVGGISESDITLCATSTNSLILGFNVRPTGSVKAKAKELGVEIKTYSIIYALLDDIKALLSGLMSPIVEEENTGQAEVRETFNIPKVGTIAGCMVVDGSIQRGIKVRLIRDGVVVHTGAISSLKRFKDDAKEVSKGYECGIMLENHNDIKVGDVFETYKEITKTKIL.

The segment at 57 to 211 (YIPANKTKDK…KDKSKPKVAT (155 aa)) is disordered. A compositionally biased stretch (basic and acidic residues) spans 104-115 (TTSEKQKDKGEQ). Residues 199 to 211 (RHKKDKSKPKVAT) show a composition bias toward basic residues. Residues 381–550 (ERPPVVTIMG…LIQAEVLELK (170 aa)) form the tr-type G domain. The interval 390–397 (GHVDHGKT) is G1. 390–397 (GHVDHGKT) contacts GTP. A G2 region spans residues 415–419 (GITQH). The G3 stretch occupies residues 436–439 (DTPG). Residues 436–440 (DTPGH) and 490–493 (NKMD) each bind GTP. A G4 region spans residues 490-493 (NKMD). A G5 region spans residues 526 to 528 (SAK).

Belongs to the TRAFAC class translation factor GTPase superfamily. Classic translation factor GTPase family. IF-2 subfamily.

Its subcellular location is the cytoplasm. Its function is as follows. One of the essential components for the initiation of protein synthesis. Protects formylmethionyl-tRNA from spontaneous hydrolysis and promotes its binding to the 30S ribosomal subunits. Also involved in the hydrolysis of GTP during the formation of the 70S ribosomal complex. In Helicobacter hepaticus (strain ATCC 51449 / 3B1), this protein is Translation initiation factor IF-2.